Reading from the N-terminus, the 101-residue chain is Apolipoprotein C-II (101 aa).

The signal sequence occupies residues 1–17; that stretch reads MGTRFLLALCLVLLVLG. A lipid binding region spans residues 66–74; it reads AVDEKLRDL. A lipoprotein lipase cofactor region spans residues 78–101; it reads STAAMSTYTGIFTDQVLSVLKGEE.

Belongs to the apolipoprotein C2 family. In terms of processing, proapolipoprotein C-II is synthesized as a sialic acid containing glycoprotein which is subsequently desialylated prior to its proteolytic processing. Post-translationally, proapolipoprotein C-II, the major form found in plasma undergoes proteolytic cleavage of its N-terminal hexapeptide to generate apolipoprotein C-II, which occurs as the minor form in plasma.

It localises to the secreted. Component of chylomicrons, very low-density lipoproteins (VLDL), low-density lipoproteins (LDL), and high-density lipoproteins (HDL) in plasma. Plays an important role in lipoprotein metabolism as an activator of lipoprotein lipase. Both proapolipoprotein C-II and apolipoprotein C-II can activate lipoprotein lipase. This Chlorocebus sabaeus (Green monkey) protein is Apolipoprotein C-II (APOC2).